Reading from the N-terminus, the 123-residue chain is Potassium voltage-gated channel subfamily E member 2 (123 aa).

N-linked (GlcNAc...) asparagine glycans are attached at residues N6 and N29. A helical membrane pass occupies residues 49-69; it reads VILYLMVMIGMFSFIVVAILV. Over 70 to 123 the chain is Cytoplasmic; sequence STVKSKRREHSQHPYHQYIVEDWQEKYKSQILHLEDSKATIHENMGATGFTVSP.

It belongs to the potassium channel KCNE family. In terms of assembly, interacts with KCNB1. Associates with KCNH2/ERG1. May associate with KCNQ2 and KCNQ3. Associates with HCN1 and probably HCN2. Heteromultimer with KCNC2. Interacts with KCNC2. Interacts with KCNQ1. Forms a heterooligomer complex with KCNQ1 that targets to the membrane raft and leading to currents with an apparently instantaneous activation, a rapid deactivation process and a linear current-voltage relationship and decreases the amplitude of the outward current.

It localises to the cell membrane. Its subcellular location is the apical cell membrane. Ancillary protein that functions as a regulatory subunit of the voltage-gated potassium (Kv) channel complex composed of pore-forming and potassium-conducting alpha subunits and of regulatory beta subunits. KCNE2 beta subunit modulates the gating kinetics and enhances stability of the channel complex. Alters the gating of the delayed rectifier Kv channel containing KCNB1 alpha subunit. Associates with KCNH2/HERG alpha subunit Kv channel to form the rapidly activating component of the delayed rectifying potassium current (IKr) in heart. May associate with KCNQ2 and/or KCNQ3 alpha subunits to modulate the native M-type current. May associate with HCN1 and HCN2 channel subunits to increase potassium current. Forms a heterooligomer complex with KCNQ1/KVLQT1 alpha subunits which leads to currents with an apparently instantaneous activation, a rapid deactivation process and a linear current-voltage relationship and decreases the amplitude of the outward current. KCNQ1-KCNE2 channel associates with Na(+)-coupled myo-inositol symporter in the apical membrane of choroid plexus epithelium and regulates the myo-inositol gradient between blood and cerebrospinal fluid with an impact on neuron excitability. The polypeptide is Potassium voltage-gated channel subfamily E member 2 (Mus musculus (Mouse)).